Here is a 112-residue protein sequence, read N- to C-terminus: UPF0060 membrane protein AAur_4166 (112 aa).

Transmembrane regions (helical) follow at residues 8 to 28 (ILFV…WQAV), 33 to 53 (AWWW…FAAF), 62 to 82 (VLAA…MLMD), and 91 to 111 (VIGA…PRPG).

Belongs to the UPF0060 family.

The protein localises to the cell membrane. The sequence is that of UPF0060 membrane protein AAur_4166 from Paenarthrobacter aurescens (strain TC1).